A 286-amino-acid chain; its full sequence is Isopentenyl-diphosphate Delta-isomerase II (286 aa).

One can recognise a Nudix hydrolase domain in the interval 104–256; the sequence is MLHRAFSVFL…GLKLSPWFRL (153 aa). Catalysis depends on residues cysteine 141 and glutamate 203.

This sequence belongs to the IPP isomerase type 1 family.

The enzyme catalyses isopentenyl diphosphate = dimethylallyl diphosphate. The protein operates within isoprenoid biosynthesis; dimethylallyl diphosphate biosynthesis; dimethylallyl diphosphate from isopentenyl diphosphate: step 1/1. It participates in porphyrin-containing compound metabolism; chlorophyll biosynthesis. In terms of biological role, catalyzes the 1,3-allylic rearrangement of the homoallylic substrate isopentenyl (IPP) to its highly electrophilic allylic isomer, dimethylallyl diphosphate (DMAPP). The sequence is that of Isopentenyl-diphosphate Delta-isomerase II (IPI2) from Clarkia breweri (Fairy fans).